The chain runs to 103 residues: Large ribosomal subunit protein eL42 (103 aa).

Zn(2+)-binding residues include Cys18 and Cys21. The segment at Cys18–Cys81 adopts a C4-type zinc-finger fold. Residues Leu40–Gln62 form a disordered region. Basic residues predominate over residues Tyr47–Lys57. 2 residues coordinate Zn(2+): Cys78 and Cys81.

This sequence belongs to the eukaryotic ribosomal protein eL42 family. As to quaternary structure, part of the 50S ribosomal subunit. It depends on Zn(2+) as a cofactor.

Binds to the 23S rRNA. This is Large ribosomal subunit protein eL42 from Desulfurococcus amylolyticus (strain DSM 18924 / JCM 16383 / VKM B-2413 / 1221n) (Desulfurococcus kamchatkensis).